Here is a 115-residue protein sequence, read N- to C-terminus: MIGLTKVCWTMSKKEVVDNSIKIEYLRSSFDNVQSLIQFADQKIGNLLLIDTITVGIFITYATNYELSLKDLTVWNILLFITGLIFTVSSVILVYKSIIKVVCSAQSELGLFYKS.

The next 2 membrane-spanning stretches (helical) occupy residues 44 to 64 (IGNL…YATN) and 74 to 94 (VWNI…VILV).

The protein localises to the cell inner membrane. Pycsar (pyrimidine cyclase system for antiphage resistance) provides immunity against bacteriophage. The pyrimidine cyclase (PycC) synthesizes cyclic nucleotides in response to infection; these serve as specific second messenger signals. The signals activate the adjacent effector, leading to bacterial cell death and abortive phage infection. A clade C Pycsar system. Functionally, the effector gene of a two-gene Pycsar system. Expression of this and adjacent uridylate cyclase TpPycC (AC A0A1T4LJ54) probably confers resistance to bacteriophage. The genes are probably only expressed in response to bacteriophage infection. Probably only responds to cUMP (produced by its cognate NTP cyclase), acts by impairing membrane integrity. In Treponema porcinum, this protein is Pycsar effector protein TpPycTM.